The following is a 61-amino-acid chain: Protein translocase subunit SecE (61 aa).

A helical membrane pass occupies residues leucine 39 to leucine 59.

The protein belongs to the SecE/SEC61-gamma family. In terms of assembly, component of the Sec protein translocase complex. Heterotrimer consisting of SecY (alpha), SecG (beta) and SecE (gamma) subunits. The heterotrimers can form oligomers, although 1 heterotrimer is thought to be able to translocate proteins. Interacts with the ribosome. May interact with SecDF, and other proteins may be involved.

The protein localises to the cell membrane. In terms of biological role, essential subunit of the Sec protein translocation channel SecYEG. Clamps together the 2 halves of SecY. May contact the channel plug during translocation. In Pyrococcus abyssi (strain GE5 / Orsay), this protein is Protein translocase subunit SecE.